Reading from the N-terminus, the 213-residue chain is Ras-related protein Rab-25 (213 aa).

GTP contacts are provided by S21, G24, K25, T26, N27, S38, H39, T43, and T44. Residue T26 participates in Mg(2+) binding. Short sequence motifs (switch) lie at residues 35–49 and 67–84; these read NEFS…GVEF and DTAG…YYRG. Mg(2+)-binding residues include T44 and D67. GTP-binding residues include G70, N125, K126, D128, A156, and L157. 2 S-geranylgeranyl cysteine lipidation sites follow: C209 and C210. Cysteine methyl ester is present on C210. The propeptide at 211-213 is removed in mature form; the sequence is ISL.

It belongs to the small GTPase superfamily. Rab family. Interacts (GTP-bound form) with RAB11FIP1, RAB11FIP2, RAB11FIP3 and RAB11FIP4. Interacts (via the hypervariable C-terminal region) with ITGB1 (via the cytoplasmic region); the interaction is GTP-dependent. Interacts with ITGAV. Associates with the integrin alpha-V/beta-1 heterodimer. Interacts with VPS33B. It depends on Mg(2+) as a cofactor. Expression is restricted to epithelial cells. Expressed in ovarian epithelium (NOE) and breast tissue. Expressed in ovarian cancer; expression is increased relative to NOE cells. Expression in ovarian cancer is stage dependent, with stage III and stage IV showing higher levels than early stage cancers. Expressed in breast cancer; expression is increased relative to normal breast tissue.

The protein localises to the cell membrane. The protein resides in the cytoplasmic vesicle. It localises to the cell projection. Its subcellular location is the pseudopodium membrane. It catalyses the reaction GTP + H2O = GDP + phosphate + H(+). With respect to regulation, regulated by guanine nucleotide exchange factors (GEFs) which promote the exchange of bound GDP for free GTP. Regulated by GTPase activating proteins (GAPs) which increase the GTP hydrolysis activity. Inhibited by GDP dissociation inhibitors (GDIs) which prevent Rab-GDP dissociation. The small GTPases Rab are key regulators of intracellular membrane trafficking, from the formation of transport vesicles to their fusion with membranes. Rabs cycle between an inactive GDP-bound form and an active GTP-bound form that is able to recruit to membranes different set of downstream effectors directly responsible for vesicle formation, movement, tethering and fusion. RAB25 regulates epithelial cell differentiation, proliferation and survival, thereby playing key roles in tumorigenesis. Promotes invasive migration of cells in which it functions to localize and maintain integrin alpha-V/beta-1 at the tips of extending pseudopodia. Involved in the regulation of epithelial morphogenesis through the control of CLDN4 expression and localization at tight junctions. May selectively regulate the apical recycling pathway. Together with MYO5B regulates transcytosis. The chain is Ras-related protein Rab-25 from Homo sapiens (Human).